The chain runs to 552 residues: CTP synthase (552 aa).

Positions 1–271 (MASAASSKHL…DAFVVRRLGL (271 aa)) are amidoligase domain. CTP is bound at residue Ser18. Ser18 serves as a coordination point for UTP. Residues 19–24 (SLGKGL) and Asp76 each bind ATP. Mg(2+) contacts are provided by Asp76 and Glu145. CTP is bound by residues 152 to 154 (DIE), 192 to 197 (KTKPTQ), and Lys228. UTP contacts are provided by residues 192–197 (KTKPTQ) and Lys228. The region spanning 296-546 (TIALVGKYVD…IEAALKYSAG (251 aa)) is the Glutamine amidotransferase type-1 domain. Residue Gly359 participates in L-glutamine binding. The Nucleophile; for glutamine hydrolysis role is filled by Cys386. L-glutamine contacts are provided by residues 387–390 (LGLQ), Glu410, and Arg472. Active-site residues include His519 and Glu521.

It belongs to the CTP synthase family. As to quaternary structure, homotetramer.

The catalysed reaction is UTP + L-glutamine + ATP + H2O = CTP + L-glutamate + ADP + phosphate + 2 H(+). It catalyses the reaction L-glutamine + H2O = L-glutamate + NH4(+). The enzyme catalyses UTP + NH4(+) + ATP = CTP + ADP + phosphate + 2 H(+). It participates in pyrimidine metabolism; CTP biosynthesis via de novo pathway; CTP from UDP: step 2/2. Its activity is regulated as follows. Allosterically activated by GTP, when glutamine is the substrate; GTP has no effect on the reaction when ammonia is the substrate. The allosteric effector GTP functions by stabilizing the protein conformation that binds the tetrahedral intermediate(s) formed during glutamine hydrolysis. Inhibited by the product CTP, via allosteric rather than competitive inhibition. Its function is as follows. Catalyzes the ATP-dependent amination of UTP to CTP with either L-glutamine or ammonia as the source of nitrogen. Regulates intracellular CTP levels through interactions with the four ribonucleotide triphosphates. The polypeptide is CTP synthase (Thermobifida fusca (strain YX)).